A 73-amino-acid polypeptide reads, in one-letter code: Conotoxin Gla(3)-TxVI (73 aa).

The first 19 residues, 1–19 (MQKLIILLLVAAVLMSAQA), serve as a signal peptide directing secretion. Residues 20 to 44 (VLQEKRPKEKIKFLSKRKTDAEKQQ) constitute a propeptide that is removed on maturation. Cystine bridges form between C48–C62, C55–C66, and C61–C71. P49 is subject to 4-hydroxyproline. The residue at position 53 (E53) is a 4-carboxyglutamate; partial. 4-hydroxyproline is present on P54. E60 is modified (4-carboxyglutamate). W64 carries the post-translational modification 6'-bromotryptophan.

This sequence belongs to the conotoxin O2 superfamily. In terms of tissue distribution, expressed by the venom duct.

Its subcellular location is the secreted. The sequence is that of Conotoxin Gla(3)-TxVI from Conus textile (Cloth-of-gold cone).